The following is a 773-amino-acid chain: ATP-dependent permease MDL2, mitochondrial (773 aa).

The N-terminal 90 residues, 1–90, are a transit peptide targeting the mitochondrion; it reads MLNGRLPLLR…SPISKGSARS (90 aa). Over residues 73 to 84 the composition is skewed to polar residues; it reads PETSLPSASPIS. Positions 73 to 95 are disordered; that stretch reads PETSLPSASPISKGSARSAHAKE. The ABC transmembrane type-1 domain occupies 119–413; it reads LLTAILLLTI…LSTFYSEIMQ (295 aa). Transmembrane regions (helical) follow at residues 123-143, 170-192, and 257-277; these read ILLL…IGIV, FLSF…FILL, and VVGV…LLFF. 481 to 488 lines the ATP pocket; that stretch reads GPSGRGKS. Positions 493-733 constitute an ABC transporter domain; the sequence is LLLRYYNPTT…DDNDNNHDND (241 aa). Composition is skewed to basic and acidic residues over residues 706–733 and 740–762; these read KEDL…HDND and ETKD…DAAK. A disordered region spans residues 706-773; that stretch reads KEDLNESKEH…ANPIKITPQP (68 aa).

This sequence belongs to the ABC transporter superfamily. ABCB family. Mitochondrial peptide exporter (TC 3.A.1.212) subfamily.

It is found in the mitochondrion inner membrane. This chain is ATP-dependent permease MDL2, mitochondrial (MDL2), found in Saccharomyces cerevisiae (strain ATCC 204508 / S288c) (Baker's yeast).